The sequence spans 144 residues: Signal recognition particle 19 kDa protein (144 aa).

Residues 117 to 144 are disordered; it reads TRTQKTGGGDQSLQQGEGSKKGKGKKKK.

It belongs to the SRP19 family. Component of a signal recognition particle complex that consists of a 7SL RNA molecule of 300 nucleotides and six protein subunits: SRP72, SRP68, SRP54, SRP19, SRP14 and SRP9. Interacts with IPO5, IPO7, IPO8, KPNB1 and TNPO1. Interactions with IPO8 and TNPO1 may be involved in SRP19 import into the nucleus.

The protein localises to the cytoplasm. It is found in the nucleus. It localises to the nucleolus. The protein resides in the nucleoplasm. Component of the signal recognition particle (SRP) complex, a ribonucleoprotein complex that mediates the cotranslational targeting of secretory and membrane proteins to the endoplasmic reticulum (ER). Binds directly to 7SL RNA. Mediates binding of SRP54 to the SRP complex. The polypeptide is Signal recognition particle 19 kDa protein (Canis lupus familiaris (Dog)).